A 351-amino-acid polypeptide reads, in one-letter code: 3-dehydroquinate synthase (351 aa).

Residues 126 to 127 (TT), lysine 138, and lysine 147 contribute to the NAD(+) site. Zn(2+)-binding residues include glutamate 180, histidine 244, and histidine 260.

It belongs to the sugar phosphate cyclases superfamily. Dehydroquinate synthase family. Co(2+) is required as a cofactor. It depends on Zn(2+) as a cofactor. NAD(+) serves as cofactor.

It is found in the cytoplasm. It catalyses the reaction 7-phospho-2-dehydro-3-deoxy-D-arabino-heptonate = 3-dehydroquinate + phosphate. The protein operates within metabolic intermediate biosynthesis; chorismate biosynthesis; chorismate from D-erythrose 4-phosphate and phosphoenolpyruvate: step 2/7. Functionally, catalyzes the conversion of 3-deoxy-D-arabino-heptulosonate 7-phosphate (DAHP) to dehydroquinate (DHQ). The chain is 3-dehydroquinate synthase from Exiguobacterium sp. (strain ATCC BAA-1283 / AT1b).